Reading from the N-terminus, the 490-residue chain is GDP-fucose protein O-fucosyltransferase 2 (490 aa).

The signal sequence occupies residues 1–25 (MRGSWPRLGFPALLLLLHLLTGSDA). N-linked (GlcNAc...) asparagine glycosylation is found at Asn29 and Asn79. Residue 81 to 85 (SEGFN) participates in GDP-beta-L-fucose binding. Glu82 functions as the Proton acceptor in the catalytic mechanism. A disulfide bridge links Cys203 with Cys226. GDP-beta-L-fucose is bound at residue 336-338 (HLR). Residue Asn368 is glycosylated (N-linked (GlcNAc...) asparagine). Residues Asp418 and 435 to 436 (TF) contribute to the GDP-beta-L-fucose site. A disulfide bridge connects residues Cys459 and Cys466.

The protein belongs to the glycosyltransferase 68 family.

It localises to the endoplasmic reticulum. It is found in the golgi apparatus. The enzyme catalyses L-seryl-[protein] + GDP-beta-L-fucose = 3-O-(alpha-L-fucosyl)-L-seryl-[protein] + GDP + H(+). It carries out the reaction L-threonyl-[protein] + GDP-beta-L-fucose = 3-O-(alpha-L-fucosyl)-L-threonyl-[protein] + GDP + H(+). The protein operates within protein modification; protein glycosylation. With respect to regulation, does not require divalent metal ions for optimal activity. Catalyzes the reaction that attaches fucose through an O-glycosidic linkage to a conserved serine or threonine residue in the consensus sequence C1-X-X-S/T-C2 of thrombospondin type I repeats (TSRs) where C1 and C2 are the first and second cysteines of the repeat, respectively. O-fucosylates members of several protein families including the ADAMTS, the thrombospondin (TSP) and spondin families. This Drosophila melanogaster (Fruit fly) protein is GDP-fucose protein O-fucosyltransferase 2.